A 517-amino-acid polypeptide reads, in one-letter code: Ribonuclease Y (517 aa).

Residues 1 to 21 (MIESLIALIAAIVGLGIGYLV) form a helical membrane-spanning segment. The 67-residue stretch at 207–273 (LINVINIKND…TKVIELLVED (67 aa)) folds into the KH domain. Residues 333 to 426 (ALAHSLEVAH…VCAADTLSAA (94 aa)) enclose the HD domain.

The protein belongs to the RNase Y family.

The protein resides in the cell membrane. Its function is as follows. Endoribonuclease that initiates mRNA decay. The chain is Ribonuclease Y from Campylobacter jejuni subsp. jejuni serotype O:6 (strain 81116 / NCTC 11828).